The sequence spans 443 residues: Adenylyltransferase and sulfurtransferase UBA4 (443 aa).

ATP is bound by residues glycine 81, aspartate 102, 109-113, lysine 126, and 170-171; these read SNLHR and DS. Zn(2+)-binding residues include cysteine 212 and cysteine 215. Cysteine 229 acts as the Glycyl thioester intermediate; for adenylyltransferase activity in catalysis. Zn(2+) contacts are provided by cysteine 290 and cysteine 293. The Rhodanese domain maps to 342-441; that stretch reads KERGFVCLDV…YIDEINPSLP (100 aa). Residue cysteine 400 is the Cysteine persulfide intermediate; for sulfurtransferase activity of the active site.

In the N-terminal section; belongs to the HesA/MoeB/ThiF family. UBA4 subfamily. It depends on Zn(2+) as a cofactor.

It is found in the cytoplasm. It localises to the cytosol. Its pathway is tRNA modification; 5-methoxycarbonylmethyl-2-thiouridine-tRNA biosynthesis. Functionally, plays a central role in 2-thiolation of mcm(5)S(2)U at tRNA wobble positions of cytosolic tRNA(Lys), tRNA(Glu) and tRNA(Gln). Acts by mediating the C-terminal thiocarboxylation of sulfur carrier URM1. Its N-terminus first activates URM1 as acyl-adenylate (-COAMP), then the persulfide sulfur on the catalytic cysteine is transferred to URM1 to form thiocarboxylation (-COSH) of its C-terminus. The reaction probably involves hydrogen sulfide that is generated from the persulfide intermediate and that acts as a nucleophile towards URM1. Subsequently, a transient disulfide bond is formed. Does not use thiosulfate as sulfur donor; NFS1 probably acting as a sulfur donor for thiocarboxylation reactions. Prior mcm(5) tRNA modification by the elongator complex is required for 2-thiolation. May also be involved in protein urmylation. In Eremothecium gossypii (strain ATCC 10895 / CBS 109.51 / FGSC 9923 / NRRL Y-1056) (Yeast), this protein is Adenylyltransferase and sulfurtransferase UBA4.